A 1020-amino-acid chain; its full sequence is Probable beta-galactosidase B (1020 aa).

The first 22 residues, 1-22 (MLISKTVLSGLALGASFVGVSA), serve as a signal peptide directing secretion. Residue asparagine 25 is glycosylated (N-linked (GlcNAc...) asparagine). Position 90 (tyrosine 90) interacts with substrate. An N-linked (GlcNAc...) asparagine glycan is attached at asparagine 111. Substrate-binding residues include asparagine 135, alanine 136, and glutamate 137. Asparagine 172 is a glycosylation site (N-linked (GlcNAc...) asparagine). A substrate-binding site is contributed by asparagine 195. The Proton donor role is filled by glutamate 196. N-linked (GlcNAc...) asparagine glycans are attached at residues asparagine 210 and asparagine 251. Residue tyrosine 264 coordinates substrate. Cysteine 270 and cysteine 323 are joined by a disulfide. Asparagine 271 is a glycosylation site (N-linked (GlcNAc...) asparagine). The Nucleophile role is filled by glutamate 307. Position 372 (tyrosine 372) interacts with substrate. 11 N-linked (GlcNAc...) asparagine glycosylation sites follow: asparagine 410, asparagine 455, asparagine 549, asparagine 596, asparagine 625, asparagine 702, asparagine 747, asparagine 785, asparagine 819, asparagine 880, and asparagine 919.

This sequence belongs to the glycosyl hydrolase 35 family.

It localises to the secreted. The enzyme catalyses Hydrolysis of terminal non-reducing beta-D-galactose residues in beta-D-galactosides.. Functionally, cleaves beta-linked terminal galactosyl residues from gangliosides, glycoproteins, and glycosaminoglycans. This is Probable beta-galactosidase B (lacB) from Aspergillus flavus (strain ATCC 200026 / FGSC A1120 / IAM 13836 / NRRL 3357 / JCM 12722 / SRRC 167).